We begin with the raw amino-acid sequence, 495 residues long: Aspartyl/glutamyl-tRNA(Asn/Gln) amidotransferase subunit B (495 aa).

Belongs to the GatB/GatE family. GatB subfamily. Heterotrimer of A, B and C subunits.

It catalyses the reaction L-glutamyl-tRNA(Gln) + L-glutamine + ATP + H2O = L-glutaminyl-tRNA(Gln) + L-glutamate + ADP + phosphate + H(+). The enzyme catalyses L-aspartyl-tRNA(Asn) + L-glutamine + ATP + H2O = L-asparaginyl-tRNA(Asn) + L-glutamate + ADP + phosphate + 2 H(+). In terms of biological role, allows the formation of correctly charged Asn-tRNA(Asn) or Gln-tRNA(Gln) through the transamidation of misacylated Asp-tRNA(Asn) or Glu-tRNA(Gln) in organisms which lack either or both of asparaginyl-tRNA or glutaminyl-tRNA synthetases. The reaction takes place in the presence of glutamine and ATP through an activated phospho-Asp-tRNA(Asn) or phospho-Glu-tRNA(Gln). In Methanosarcina acetivorans (strain ATCC 35395 / DSM 2834 / JCM 12185 / C2A), this protein is Aspartyl/glutamyl-tRNA(Asn/Gln) amidotransferase subunit B.